The sequence spans 431 residues: Chaperone SurA (431 aa).

The signal sequence occupies residues methionine 1 to alanine 20. PpiC domains lie at asparagine 171–aspartate 272 and valine 282–aspartate 382.

The protein localises to the periplasm. It catalyses the reaction [protein]-peptidylproline (omega=180) = [protein]-peptidylproline (omega=0). In terms of biological role, chaperone involved in the correct folding and assembly of outer membrane proteins. Recognizes specific patterns of aromatic residues and the orientation of their side chains, which are found more frequently in integral outer membrane proteins. May act in both early periplasmic and late outer membrane-associated steps of protein maturation. This Pectobacterium atrosepticum (strain SCRI 1043 / ATCC BAA-672) (Erwinia carotovora subsp. atroseptica) protein is Chaperone SurA.